A 154-amino-acid polypeptide reads, in one-letter code: Anaerobic ribonucleoside-triphosphate reductase-activating protein (154 aa).

Positions 26, 30, and 33 each coordinate [4Fe-4S] cluster. Residues 32–34 and Gly-74 contribute to the S-adenosyl-L-methionine site; that span reads GCY.

Belongs to the organic radical-activating enzymes family. Forms a tetramer composed of two NrdD and two NrdG subunits. The cofactor is [4Fe-4S] cluster.

It is found in the cytoplasm. The catalysed reaction is glycyl-[protein] + reduced [flavodoxin] + S-adenosyl-L-methionine = glycin-2-yl radical-[protein] + semiquinone [flavodoxin] + 5'-deoxyadenosine + L-methionine + H(+). In terms of biological role, activation of anaerobic ribonucleoside-triphosphate reductase under anaerobic conditions by generation of an organic free radical, using S-adenosylmethionine and reduced flavodoxin as cosubstrates to produce 5'-deoxy-adenosine. In Salmonella typhimurium (strain LT2 / SGSC1412 / ATCC 700720), this protein is Anaerobic ribonucleoside-triphosphate reductase-activating protein (nrdG).